The chain runs to 384 residues: MTKPIITFNNVSKTFEDSGTQVLKNINFDLEEGKFYTLLGASGSGKSTILNIMAGLLDASSGDIYLDGERINDLPINKRDIHTVFQNYALFPHMTVFENVAFALKLKKVDKKEIAKRVKETLKMVQLEGFENRSIQKLSGGQRQRVAIARAIINQPRVVLLDEPLSALDLKLRTEMQYELRELQQRLGITFVFVTHDQEEALAMSDWIFVMNEGEIVQSGTPVDIYDEPINHFVANFIGESNIINGTMIEDYLVSFNGKEFESVDGGMRPNEPVEVVIRPEDLQITLPEEGKLQVKVDTQLFRGVHYEIIAYDELGNEWMIHSTRKAIEGEVIGLDFTPEDLHIMRLNETEEEFDARIEEYVEMDEPEDGLINAIEEERNEENL.

An ABC transporter domain is found at 6–238; sequence ITFNNVSKTF…PINHFVANFI (233 aa). An ATP-binding site is contributed by 40–47; the sequence is GASGSGKS.

The protein belongs to the ABC transporter superfamily. Spermidine/putrescine importer (TC 3.A.1.11.1) family. The complex is composed of two ATP-binding proteins (PotA), two transmembrane proteins (PotB and PotC) and a solute-binding protein (PotD).

Its subcellular location is the cell membrane. The enzyme catalyses ATP + H2O + polyamine-[polyamine-binding protein]Side 1 = ADP + phosphate + polyamineSide 2 + [polyamine-binding protein]Side 1.. Functionally, part of the ABC transporter complex PotABCD involved in spermidine/putrescine import. Responsible for energy coupling to the transport system. The sequence is that of Spermidine/putrescine import ATP-binding protein PotA from Streptococcus pyogenes serotype M18 (strain MGAS8232).